The sequence spans 186 residues: MASVSYQKPTSTTVGKQMIFTGPDYIKDYLPKIHQHTSYVGEQHLALEKTGDLRYLWRPASNRSLPAKYKHEYVSEIGWRIPQYNFINKSRLGSGFHIKYEELSQASLDSITHRYQNPWQPKPHVLDMQGKQSRASFAWHMSAFEDTDQRNSKWAILVRQCKSSLPRASKPPKLPKLPKKEKKRKH.

The interval 163 to 186 (SSLPRASKPPKLPKLPKKEKKRKH) is disordered. Positions 176 to 186 (KLPKKEKKRKH) are enriched in basic residues.

This Homo sapiens (Human) protein is Protein SPMIP2.